A 400-amino-acid polypeptide reads, in one-letter code: GTPase Obg (400 aa).

The region spanning 1–159 (MKFVDEVQIR…RTLKLELLLL (159 aa)) is the Obg domain. The region spanning 160-333 (ADVGMLGLPN…VCYDILDLLD (174 aa)) is the OBG-type G domain. GTP contacts are provided by residues 166-173 (GLPNAGKS), 191-195 (FTTLV), 213-216 (DIPG), 283-286 (NKMD), and 314-316 (TAI). The Mg(2+) site is built by serine 173 and threonine 193.

Belongs to the TRAFAC class OBG-HflX-like GTPase superfamily. OBG GTPase family. Monomer. It depends on Mg(2+) as a cofactor.

It localises to the cytoplasm. In terms of biological role, an essential GTPase which binds GTP, GDP and possibly (p)ppGpp with moderate affinity, with high nucleotide exchange rates and a fairly low GTP hydrolysis rate. Plays a role in control of the cell cycle, stress response, ribosome biogenesis and in those bacteria that undergo differentiation, in morphogenesis control. In Aeromonas hydrophila subsp. hydrophila (strain ATCC 7966 / DSM 30187 / BCRC 13018 / CCUG 14551 / JCM 1027 / KCTC 2358 / NCIMB 9240 / NCTC 8049), this protein is GTPase Obg.